The primary structure comprises 175 residues: B9 domain-containing protein 2 (175 aa).

The region spanning 2-118 (AEVHVIGQII…ACPTWRPLGS (117 aa)) is the C2 B9-type domain.

The protein belongs to the B9D family. In terms of assembly, part of the tectonic-like complex (also named B9 complex). Interacts with TUBG1.

Its subcellular location is the cytoplasm. It localises to the cytoskeleton. The protein resides in the cilium basal body. The protein localises to the cilium axoneme. It is found in the nucleus. In terms of biological role, component of the tectonic-like complex, a complex localized at the transition zone of primary cilia and acting as a barrier that prevents diffusion of transmembrane proteins between the cilia and plasma membranes. This chain is B9 domain-containing protein 2 (B9D2), found in Homo sapiens (Human).